The following is a 474-amino-acid chain: tRNA-2-methylthio-N(6)-dimethylallyladenosine synthase (474 aa).

The MTTase N-terminal domain occupies 3–120 (KKLHIKTWGC…LPEMINSVRG (118 aa)). Residues Cys12, Cys49, Cys83, Cys157, Cys161, and Cys164 each contribute to the [4Fe-4S] cluster site. The Radical SAM core domain occupies 143–378 (RADGPSAFVS…INQQVTAWSR (236 aa)). Residues 378-441 (RRMLGTTQRI…TNSMRGKVVR (64 aa)) form the TRAM domain.

The protein belongs to the methylthiotransferase family. MiaB subfamily. Monomer. Requires [4Fe-4S] cluster as cofactor.

Its subcellular location is the cytoplasm. The enzyme catalyses N(6)-dimethylallyladenosine(37) in tRNA + (sulfur carrier)-SH + AH2 + 2 S-adenosyl-L-methionine = 2-methylsulfanyl-N(6)-dimethylallyladenosine(37) in tRNA + (sulfur carrier)-H + 5'-deoxyadenosine + L-methionine + A + S-adenosyl-L-homocysteine + 2 H(+). Its function is as follows. Catalyzes the methylthiolation of N6-(dimethylallyl)adenosine (i(6)A), leading to the formation of 2-methylthio-N6-(dimethylallyl)adenosine (ms(2)i(6)A) at position 37 in tRNAs that read codons beginning with uridine. The protein is tRNA-2-methylthio-N(6)-dimethylallyladenosine synthase of Enterobacter sp. (strain 638).